The following is a 399-amino-acid chain: S-adenosylmethionine synthase (399 aa).

His-17 is a binding site for ATP. Asp-19 serves as a coordination point for Mg(2+). Glu-52 is a binding site for K(+). The L-methionine site is built by Glu-65 and Gln-109. A flexible loop region spans residues 109–119 (QSADIAQGVDA). ATP is bound by residues 177–179 (DSK), 243–244 (KF), Asp-252, 258–259 (RK), Ala-275, and Lys-279. Position 252 (Asp-252) interacts with L-methionine. L-methionine is bound at residue Lys-283.

Belongs to the AdoMet synthase family. Homotetramer; dimer of dimers. It depends on Mg(2+) as a cofactor. Requires K(+) as cofactor.

It is found in the cytoplasm. The catalysed reaction is L-methionine + ATP + H2O = S-adenosyl-L-methionine + phosphate + diphosphate. It functions in the pathway amino-acid biosynthesis; S-adenosyl-L-methionine biosynthesis; S-adenosyl-L-methionine from L-methionine: step 1/1. Functionally, catalyzes the formation of S-adenosylmethionine (AdoMet) from methionine and ATP. The overall synthetic reaction is composed of two sequential steps, AdoMet formation and the subsequent tripolyphosphate hydrolysis which occurs prior to release of AdoMet from the enzyme. The polypeptide is S-adenosylmethionine synthase (Bradyrhizobium sp. (strain ORS 278)).